The chain runs to 485 residues: Glutamyl-tRNA(Gln) amidotransferase subunit A (485 aa).

Residues lysine 78 and serine 153 each act as charge relay system in the active site. The Acyl-ester intermediate role is filled by serine 177.

Belongs to the amidase family. GatA subfamily. Heterotrimer of A, B and C subunits.

The enzyme catalyses L-glutamyl-tRNA(Gln) + L-glutamine + ATP + H2O = L-glutaminyl-tRNA(Gln) + L-glutamate + ADP + phosphate + H(+). Its function is as follows. Allows the formation of correctly charged Gln-tRNA(Gln) through the transamidation of misacylated Glu-tRNA(Gln) in organisms which lack glutaminyl-tRNA synthetase. The reaction takes place in the presence of glutamine and ATP through an activated gamma-phospho-Glu-tRNA(Gln). This is Glutamyl-tRNA(Gln) amidotransferase subunit A from Bacillus cereus (strain G9842).